The chain runs to 150 residues: Sulfur-rich protein, serovars L1/L3 (150 aa).

The disordered stretch occupies residues 1 to 20 (MSTVPVVQGAGSSNSAQDIS). The next 2 helical transmembrane spans lie at 43–63 (VGLV…VSAA) and 69–89 (IYLA…ILSM).

It localises to the membrane. This chain is Sulfur-rich protein, serovars L1/L3 (srp), found in Chlamydia trachomatis.